The following is a 1152-amino-acid chain: Fork-head transcriptional regulator FHL1 (1152 aa).

The segment at 55–147 (TATNNVLPES…SEDDNNNNNN (93 aa)) is disordered. Over residues 64-83 (SNKKDKPIDTQDLHEDDPKA) the composition is skewed to basic and acidic residues. The segment covering 87 to 101 (TTSNGESTSNSNSVS) has biased composition (low complexity). Over residues 126–135 (VPVTSNSKSL) the composition is skewed to polar residues. Residues 171–229 (VVLGRKSNDETLQQNVDVHLSSKKAISRRHAKIFYNFGTQRFEISILGRNGAFVDNVFV) form the FHA domain. Disordered regions lie at residues 254–362 (LPSN…RKNS) and 514–557 (KKQL…PPAS). Over residues 271-286 (KQFNPSDAINLRSNLY) the composition is skewed to polar residues. A compositionally biased stretch (basic residues) spans 296 to 307 (PKRKPQPSKKVK). The span at 328–358 (TTAISPTASISTSTNAATAATATTPATTTAA) shows a compositional bias: low complexity. 2 coiled-coil regions span residues 449-537 (DDDE…SLAK) and 734-777 (ELYI…QKSL). Residues 659–756 (KPNISFQIMI…QREIAKAKAK (98 aa)) constitute a DNA-binding region (fork-head). Disordered stretches follow at residues 787-833 (ASPY…GTSP), 846-867 (RGNG…MNDP), 951-1010 (HEGI…VPQQ), and 1057-1152 (PAMQ…AKTE). Composition is skewed to low complexity over residues 804–826 (SQSS…GSTT), 851–863 (TPAT…SLPA), and 973–987 (TTTS…TTPQ). Pro residues-rich tracts occupy residues 996 to 1006 (VKPPISTPLPQ) and 1072 to 1082 (TSVPVPLPVPS). Polar residues-rich tracts occupy residues 1115-1128 (SSLS…SNKP) and 1143-1152 (QATNKIAKTE).

Interacts with IFH1 and TBF1.

It localises to the nucleus. In complex with IFH1, acts as a transcriptional regulator of rRNA and ribosomal protein genes. The FHL1-IFH1 complex is targeted to the ribosomal protein genes by the DNA-binding factor TBF1. In Candida albicans (strain SC5314 / ATCC MYA-2876) (Yeast), this protein is Fork-head transcriptional regulator FHL1 (FHL1).